The following is a 334-amino-acid chain: Succinate receptor 1 (334 aa).

Residues 5–31 lie on the Extracellular side of the membrane; sequence MAWNATCKNWLAAEAALEKYYLSIFYG. A glycan (N-linked (GlcNAc...) asparagine) is linked at Asn8. A helical transmembrane segment spans residues 32-52; the sequence is IEFVVGVLGNTIVVYGYIFSL. The Cytoplasmic portion of the chain corresponds to 53 to 59; it reads KNWNSSN. The chain crosses the membrane as a helical span at residues 60–80; sequence IYLFNLSVSDLAFLCTLPMLI. Over 81 to 103 the chain is Extracellular; the sequence is RSYANGNWIYGDVLCISNRYVLH. Cys95 and Cys172 are disulfide-bonded. A helical membrane pass occupies residues 104 to 124; it reads ANLYTSILFLTFISIDRYLII. Residues 125-137 lie on the Cytoplasmic side of the membrane; it reads KYPFREHLLQKKE. A helical membrane pass occupies residues 138-158; it reads FAILISLAIWVLVTLELLPIL. Over 159–185 the chain is Extracellular; sequence PLINPVITDNGTTCNDFASSGDPNYNL. Asn168 carries N-linked (GlcNAc...) asparagine glycosylation. Residues 186-206 traverse the membrane as a helical segment; that stretch reads IYSMCLTLLGFLIPLFVMCFF. The Cytoplasmic segment spans residues 207–230; that stretch reads YYKIALFLKQRNRQVATALPLEKP. Residues 231–251 traverse the membrane as a helical segment; the sequence is LNLVIMAVVIFSVLFTPYHVM. Over 252-281 the chain is Extracellular; that stretch reads RNVRIASRLGSWKQYQCTQVVINSFYIVTR. A helical membrane pass occupies residues 282–302; the sequence is PLAFLNSVINPVFYFLLGDHF. At 303-334 the chain is on the cytoplasmic side; sequence RDMLMNQLRHNFKSLTSFSRWAHELLLSFREK.

Belongs to the G-protein coupled receptor 1 family. As to expression, expressed specifically in kidney. Highly expressed in immature dendritic cells, expression rapidly downregulates after maturation. Also expressed in macrophages.

It localises to the cell membrane. In terms of biological role, g protein-coupled receptor for succinate able to mediate signaling through Gq/GNAQ or Gi/GNAI second messengers depending on the cell type and the processes regulated. Succinate-SUCNR1 signaling serves as a link between metabolic stress, inflammation and energy homeostasis. In macrophages, plays a range of immune-regulatory roles. During inflammation, succinate-SUCNR1 signaling may act as an anti-inflammatory mediator or boost inflammation depending on the inflammatory status of cells. Hyperpolarizes M2 macrophages versus M1 phenotype through Gq signaling by regulating the transcription of genes involved in immune function. In activated M1 macrophages, plays a pro-inflammatory role in response to LPS. Expressed in dendritic cells, where it is involved in the sensing of immunological danger and enhances immunity. Mediates succinate triggered intracelleular calcium mobilization, induces migratory responses and acts in synergy with Toll-like receptor ligands for the production of proinflammatory cytokines as well as an enhancement of antigen-specific activation of helper T cells. In the small intestine, mediates the activation of tuft cells by dietary succinate and triggers type 2 immunity. In adipocytes, plays an important role in the control of energy metabolism. In response to succinate, controls leptin expression in an AMPK-JNK-CEBPA-dependent as well as circadian clock-regulated manner. In muscle tissue, is expressed in non-muscle cells and coordinates muscle remodeling in response to the succinate produced during exercise training in a paracrine manner. In retina, acts as a mediator of vessel growth during retinal development. In response to succinate, regulates the production of angiogenic factors, including VEGF, by retinal ganglion neurons. The polypeptide is Succinate receptor 1 (Homo sapiens (Human)).